A 167-amino-acid chain; its full sequence is Endoribonuclease YbeY (167 aa).

Residues histidine 131, histidine 135, and histidine 141 each coordinate Zn(2+).

Belongs to the endoribonuclease YbeY family. It depends on Zn(2+) as a cofactor.

The protein localises to the cytoplasm. Functionally, single strand-specific metallo-endoribonuclease involved in late-stage 70S ribosome quality control and in maturation of the 3' terminus of the 16S rRNA. The polypeptide is Endoribonuclease YbeY (Rickettsia rickettsii (strain Iowa)).